Reading from the N-terminus, the 435-residue chain is Tol-Pal system protein TolB (435 aa).

The signal sequence occupies residues 1–28 (MTKCSFFRAILVAVGLMTAAVFATPANA). Residues 288 to 310 (STAAIDTSPSYSPDGARVSFESD) are disordered.

The protein belongs to the TolB family. In terms of assembly, the Tol-Pal system is composed of five core proteins: the inner membrane proteins TolA, TolQ and TolR, the periplasmic protein TolB and the outer membrane protein Pal. They form a network linking the inner and outer membranes and the peptidoglycan layer.

The protein resides in the periplasm. Part of the Tol-Pal system, which plays a role in outer membrane invagination during cell division and is important for maintaining outer membrane integrity. In Rhizobium johnstonii (strain DSM 114642 / LMG 32736 / 3841) (Rhizobium leguminosarum bv. viciae), this protein is Tol-Pal system protein TolB.